Reading from the N-terminus, the 193-residue chain is Cysteine and glycine-rich protein 1 (193 aa).

The region spanning 10 to 61 (CGVCQKTVYFAEEVQCEGNSFHKSCFLCMVCKKNLDSTTVAVHGEEIYCKSC) is the LIM zinc-binding 1 domain. Positions 64–69 (KKYGPK) match the Nuclear localization signal motif. Ser81 is modified (phosphoserine). At Lys84 the chain carries N6-acetyllysine. A Glycyl lysine isopeptide (Lys-Gly) (interchain with G-Cter in SUMO2) cross-link involves residue Lys91. N6-acetyllysine occurs at positions 112, 131, 137, and 161. The LIM zinc-binding 2 domain maps to 119 to 170 (CPRCSQAVYAAEKVIGAGKSWHKACFRCAKCGKGLESTTLADKDGEIYCKGC). A Phosphoserine modification is found at Ser192.

Interacts with ASCC1; ASCC2 and TRIP4.

The protein resides in the nucleus. Its function is as follows. Could play a role in neuronal development. The chain is Cysteine and glycine-rich protein 1 (CSRP1) from Homo sapiens (Human).